The primary structure comprises 522 residues: Glutamate--cysteine ligase (522 aa).

The protein belongs to the glutamate--cysteine ligase type 1 family. Type 1 subfamily.

It catalyses the reaction L-cysteine + L-glutamate + ATP = gamma-L-glutamyl-L-cysteine + ADP + phosphate + H(+). It participates in sulfur metabolism; glutathione biosynthesis; glutathione from L-cysteine and L-glutamate: step 1/2. This chain is Glutamate--cysteine ligase, found in Shewanella halifaxensis (strain HAW-EB4).